A 340-amino-acid polypeptide reads, in one-letter code: MKVSIVGITGYSGLELVKILNNHKKVELVSIHATKEVGRRLSDVYPYLAGVCDLKIEDFNAQEIIEKADLVFFATPSGVASSLAEEFVQADFPIIDLSGDHRLPADVYQEWYKKSPAKKMILNKFTYALSEYTDVKGKKFIANPGCYATATELALIPLVAAGLIETDSIIVDAKSGLTGAGKALSESSHFVNVHDNYMTYKLNHHQHIPEIVQTLQAFDADMPEIQFSTSLLPVNRGIMATVYCKLKKDVAVSDIASAFAKAYDDKPFVRVQENLPELHNVIGSNFTDIGFAYNEKTNVMTVISVIDNLLKGASGQAVQNLNLMQGWDETEGLHMTPSYL.

Cys146 is an active-site residue.

It belongs to the NAGSA dehydrogenase family. Type 1 subfamily.

It localises to the cytoplasm. The enzyme catalyses N-acetyl-L-glutamate 5-semialdehyde + phosphate + NADP(+) = N-acetyl-L-glutamyl 5-phosphate + NADPH + H(+). It functions in the pathway amino-acid biosynthesis; L-arginine biosynthesis; N(2)-acetyl-L-ornithine from L-glutamate: step 3/4. Catalyzes the NADPH-dependent reduction of N-acetyl-5-glutamyl phosphate to yield N-acetyl-L-glutamate 5-semialdehyde. In Streptococcus thermophilus (strain ATCC BAA-491 / LMD-9), this protein is N-acetyl-gamma-glutamyl-phosphate reductase.